The chain runs to 116 residues: Iron-sulfur cluster insertion protein ErpA (116 aa).

Iron-sulfur cluster is bound by residues C44, C108, and C110.

The protein belongs to the HesB/IscA family. In terms of assembly, homodimer. The cofactor is iron-sulfur cluster.

Its function is as follows. Required for insertion of 4Fe-4S clusters for at least IspG. This Aeromonas hydrophila subsp. hydrophila (strain ATCC 7966 / DSM 30187 / BCRC 13018 / CCUG 14551 / JCM 1027 / KCTC 2358 / NCIMB 9240 / NCTC 8049) protein is Iron-sulfur cluster insertion protein ErpA.